Consider the following 305-residue polypeptide: tRNA pseudouridine synthase B (305 aa).

The active-site Nucleophile is Asp39.

The protein belongs to the pseudouridine synthase TruB family. Type 1 subfamily.

It carries out the reaction uridine(55) in tRNA = pseudouridine(55) in tRNA. Functionally, responsible for synthesis of pseudouridine from uracil-55 in the psi GC loop of transfer RNAs. The protein is tRNA pseudouridine synthase B of Staphylococcus epidermidis (strain ATCC 35984 / DSM 28319 / BCRC 17069 / CCUG 31568 / BM 3577 / RP62A).